The primary structure comprises 214 residues: MHTVQKDTTFTKIFVGGLPYHTTDASLRKYFEVFGDIDEAVVITDRQTAKSRGYGFVTMSDRAAAERACKDPNPIIDGRKANVNLAYLGAKPRNLQSAFTIGVQQLHPAFIQRPFGLTPQYIYPPTIVQPSMVIPTPIPSLQSPYIDYNAATQAYTHYTTAAYEQYPYAASPATGYMGYGYTSPVQQPLSTTTGAPPTAYIQYQPQQLQPDRMQ.

Positions 11 to 88 constitute an RRM domain; it reads TKIFVGGLPY…RKANVNLAYL (78 aa).

The protein belongs to the RBM38 family. As to expression, strongly expressed in the nervous system. Expressed at early neurula stages of development.

It localises to the cytoplasm. It is found in the cytosol. Its subcellular location is the nucleus. Its function is as follows. RNA-binding protein that specifically bind the 3'-UTR of VegT transcripts, leading to maintain their stability and stimulate their translation, thereby playing a role in germ layer formation. VegT is a localized maternal determinant essentially required for endoderm formation. Also has some proneural function in the open neural plate and in the context of retinogenesis. May also act as a mRNA splicing factor. May play a role in myogenic differentiation. In Xenopus laevis (African clawed frog), this protein is RNA-binding protein 38 (rbm38).